The chain runs to 248 residues: 3-deoxy-manno-octulosonate cytidylyltransferase (248 aa).

The protein belongs to the KdsB family.

The protein resides in the cytoplasm. It carries out the reaction 3-deoxy-alpha-D-manno-oct-2-ulosonate + CTP = CMP-3-deoxy-beta-D-manno-octulosonate + diphosphate. It functions in the pathway nucleotide-sugar biosynthesis; CMP-3-deoxy-D-manno-octulosonate biosynthesis; CMP-3-deoxy-D-manno-octulosonate from 3-deoxy-D-manno-octulosonate and CTP: step 1/1. Its pathway is bacterial outer membrane biogenesis; lipopolysaccharide biosynthesis. Functionally, activates KDO (a required 8-carbon sugar) for incorporation into bacterial lipopolysaccharide in Gram-negative bacteria. This is 3-deoxy-manno-octulosonate cytidylyltransferase from Salmonella typhi.